A 502-amino-acid polypeptide reads, in one-letter code: 1-aminocyclopropane-1-carboxylate synthase-like protein 1 (502 aa).

The disordered stretch occupies residues 1 to 24 (MFCLPQQESTAPTTCTGSASTQDM). Glutamate 106 lines the substrate pocket. N6-(pyridoxal phosphate)lysine is present on lysine 324.

It belongs to the class-I pyridoxal-phosphate-dependent aminotransferase family.

Does not catalyze the synthesis of 1-aminocyclopropane-1-carboxylate but is capable of catalyzing the deamination of L-vinylglycine. This Mus musculus (Mouse) protein is 1-aminocyclopropane-1-carboxylate synthase-like protein 1 (Accs).